Here is a 130-residue protein sequence, read N- to C-terminus: Small ribosomal subunit protein uS8 (130 aa).

It belongs to the universal ribosomal protein uS8 family. As to quaternary structure, part of the 30S ribosomal subunit. Contacts proteins S5 and S12.

One of the primary rRNA binding proteins, it binds directly to 16S rRNA central domain where it helps coordinate assembly of the platform of the 30S subunit. This Idiomarina loihiensis (strain ATCC BAA-735 / DSM 15497 / L2-TR) protein is Small ribosomal subunit protein uS8.